We begin with the raw amino-acid sequence, 61 residues long: MAKTSMKVKQQRAPKFSTRAYTRCTICGRPHSVLRKYGICRICFRELAYKGQIPGVKKASW.

Zn(2+) contacts are provided by Cys-24, Cys-27, Cys-40, and Cys-43.

The protein belongs to the universal ribosomal protein uS14 family. Zinc-binding uS14 subfamily. As to quaternary structure, part of the 30S ribosomal subunit. Contacts proteins S3 and S10. Zn(2+) is required as a cofactor.

Its function is as follows. Binds 16S rRNA, required for the assembly of 30S particles and may also be responsible for determining the conformation of the 16S rRNA at the A site. In Lachnospira eligens (strain ATCC 27750 / DSM 3376 / VPI C15-48 / C15-B4) (Eubacterium eligens), this protein is Small ribosomal subunit protein uS14.